The following is a 909-amino-acid chain: Yellow mounds protein A (909 aa).

The MIF4G domain occupies 7-283 (LNVVSRILNK…KNLFELKNNK (277 aa)). Disordered stretches follow at residues 178-232 (SMGG…NNNI), 415-439 (MESSSNNNNSNSQLQFSLSSSSGIK), 460-537 (INLP…SSAP), 627-689 (VPPV…SEAR), and 704-774 (SLSG…AKKH). Acidic residues predominate over residues 204 to 215 (DDDDHDEEDNEN). Low complexity-rich tracts occupy residues 216-231 (NYENTTSTTNNINNNN) and 417-436 (SSSNNNNSNSQLQFSLSSSS). Positions 473 to 490 (RSNSPSLSSVVKQPQSQQ) are enriched in polar residues. The segment covering 491-525 (NNNNNNNNNNNNTTITTTTSSNNNINNNNNNNNNN) has biased composition (low complexity). The segment covering 721–738 (STPTLKSTPAIVQNGGSI) has biased composition (polar residues). Residues 739-756 (TSTSSSSSSSSSSSSSTT) are compositionally biased toward low complexity. Residues 845–877 (TMLFDLEEMAQEQQNLEKQNDQQQNLLTQNNQI) are a coiled coil.

Functionally, plays as essential role in regulating terminal differentiation. This Dictyostelium discoideum (Social amoeba) protein is Yellow mounds protein A (yelA).